Reading from the N-terminus, the 160-residue chain is 6,7-dimethyl-8-ribityllumazine synthase (160 aa).

5-amino-6-(D-ribitylamino)uracil is bound by residues tryptophan 27, 59–61, and 81–83; these read AIE and VVI. Residue 86–87 coordinates (2S)-2-hydroxy-3-oxobutyl phosphate; that stretch reads DT. Catalysis depends on histidine 89, which acts as the Proton donor. Asparagine 114 is a 5-amino-6-(D-ribitylamino)uracil binding site. Arginine 128 serves as a coordination point for (2S)-2-hydroxy-3-oxobutyl phosphate.

The protein belongs to the DMRL synthase family. Homopentamer.

It carries out the reaction (2S)-2-hydroxy-3-oxobutyl phosphate + 5-amino-6-(D-ribitylamino)uracil = 6,7-dimethyl-8-(1-D-ribityl)lumazine + phosphate + 2 H2O + H(+). The protein operates within cofactor biosynthesis; riboflavin biosynthesis; riboflavin from 2-hydroxy-3-oxobutyl phosphate and 5-amino-6-(D-ribitylamino)uracil: step 1/2. Catalyzes the formation of 6,7-dimethyl-8-ribityllumazine by condensation of 5-amino-6-(D-ribitylamino)uracil with 3,4-dihydroxy-2-butanone 4-phosphate. This is the penultimate step in the biosynthesis of riboflavin. This chain is 6,7-dimethyl-8-ribityllumazine synthase, found in Mycobacterium leprae (strain Br4923).